Here is a 371-residue protein sequence, read N- to C-terminus: 2-oxoadipate dioxygenase/decarboxylase, chloroplastic (371 aa).

Residues 1 to 50 (MISLHSSAIKASLYGSFPSSLRSTLSVSFSAGSLIRLPSVGKRNLSVVVS) constitute a chloroplast transit peptide. Positions 113 and 117 each coordinate 2-oxoadipate. His-113 lines the Fe(2+) pocket. His-250 serves as a coordination point for Fe(2+). Residues Gln-296 and Tyr-320 each contribute to the 2-oxoadipate site. Glu-322 lines the Fe(2+) pocket.

The protein belongs to the 2-oxoadipate dioxygenase/decarboxylase family. It depends on Fe(2+) as a cofactor.

It is found in the plastid. The protein localises to the chloroplast. The enzyme catalyses 2-oxoadipate + O2 = (R)-2-hydroxyglutarate + CO2. Its pathway is amino-acid degradation. Catalyzes the decarboxylation and hydroxylation of 2-oxoadipate (2OA) to form D-2-hydroxyglutarate (D-2-HGA). Is involved in a D-lysine catabolic pathway. The protein is 2-oxoadipate dioxygenase/decarboxylase, chloroplastic of Arabidopsis thaliana (Mouse-ear cress).